Consider the following 217-residue polypeptide: Ribonuclease HII (217 aa).

The RNase H type-2 domain occupies 27 to 216; the sequence is SRVAGVDEAG…VKESIQEGVC (190 aa). 3 residues coordinate a divalent metal cation: D33, E34, and D126.

The protein belongs to the RNase HII family. The cofactor is Mn(2+). It depends on Mg(2+) as a cofactor.

The protein localises to the cytoplasm. It catalyses the reaction Endonucleolytic cleavage to 5'-phosphomonoester.. Functionally, endonuclease that specifically degrades the RNA of RNA-DNA hybrids. The protein is Ribonuclease HII of Chlamydia trachomatis serovar A (strain ATCC VR-571B / DSM 19440 / HAR-13).